A 139-amino-acid chain; its full sequence is Non-structural protein 1 (139 aa).

The DLNP; interaction with MAP1B motif lies at 136-139 (DLNS).

The protein belongs to the pneumovirus non-structural protein 1 family. In terms of assembly, monomer. Homomultimer. Heteromultimer with NS2. Interacts with the matrix protein M. Interacts with host ELOC and CUL2; this interaction allows NS1 to form an active E3 ligase with ELOC and CUL2. Interacts with host IRF3; this interaction leads to the disrupted association of IRF3 with CREBBP and thus reduced binding of IRF3 to the IFN-beta promoter. Interacts with host MAVS; this interaction prevents MAVS binding to RIGI and inhibits signaling pathway leading to interferon production. Interacts with host MAP1B/microtubule-associated protein 1B. Interacts with host TRIM25 (via SPRY domain); this interaction suppresses RIGI ubiquitination and results in decreased interaction between RIGI and MAVS.

The protein localises to the host cytoplasm. It localises to the host mitochondrion. It is found in the host nucleus. Plays a major role in antagonizing the type I IFN-mediated antiviral response by degrading or inhibiting multiple cellular factors required for either IFN induction or response pathways. Acts cooperatively with NS2 to repress activation and nuclear translocation of host IFN-regulatory factor IRF3. Also disrupts the association of IRF3 with CREBBP. Interacts with host mitochondrial-associated membrane (MAM) MAVS and prevents the interaction with RIGI. Interacts with TRIM25 to suppress TRIM25-mediated RIGI ubiquitination and thereby RIGI-MAVS interaction. Together with NS2, participates in the proteasomal degradation of host STAT2, IRF3, IRF7, TBK1 and RIGI through a NS-degradasome involving CUL2 and Elongin-C. The degradasome requires an intact mitochondrial MAVS. Decreases the levels of host TRAF3 and IKBKE/IKK-epsilon. As functions other than disruptions of the type I IFN-mediated antiviral signaling pathways, induces host SOCS1 and SOCS3 expression. Suppresses premature apoptosis by an NF-kappa-B-dependent, interferon-independent mechanism and thus facilitates virus growth. Additionally, NS1 may serve some inhibitory role in viral transcription and RNA replication. Suppresses proliferation and activation of host CD103+ CD8+ cytotoxic T-lymphocytes and Th17 helper T-lymphocytes. The chain is Non-structural protein 1 (1C) from Human respiratory syncytial virus B (strain 18537).